The sequence spans 339 residues: Quinolinate synthase (339 aa).

2 residues coordinate iminosuccinate: His-63 and Ser-81. Cys-126 contacts [4Fe-4S] cluster. Iminosuccinate-binding positions include 152-154 and Ser-169; that span reads YVN. Cys-211 lines the [4Fe-4S] cluster pocket. Residues 237–239 and Thr-254 contribute to the iminosuccinate site; that span reads HPE. Cys-297 is a binding site for [4Fe-4S] cluster.

It belongs to the quinolinate synthase family. Type 2 subfamily. [4Fe-4S] cluster serves as cofactor.

Its subcellular location is the cytoplasm. It carries out the reaction iminosuccinate + dihydroxyacetone phosphate = quinolinate + phosphate + 2 H2O + H(+). The protein operates within cofactor biosynthesis; NAD(+) biosynthesis; quinolinate from iminoaspartate: step 1/1. Functionally, catalyzes the condensation of iminoaspartate with dihydroxyacetone phosphate to form quinolinate. The sequence is that of Quinolinate synthase from Xylella fastidiosa (strain 9a5c).